We begin with the raw amino-acid sequence, 278 residues long: MAILETRDLKYSYPDGTVALNGINFKAEKGEMIAILGPNGAGKSTTFLHFNGILKPSNGSVILKGEAIKYDNKSLLNVRKTVGIVFQNPDDQLFAPTVEQDVAFGPMNLGLSKEEIEKRVKDSLKAVSMEGFERKPPHHLSGGQKKRIAIAGILAMNPEIIVLDEPTSGLDPMGASQIMKLLYELNRQGITIIISTHDVDLVPIYANKVYLLNEGKIIKGGTPREIFSDSETVRSANLRLPRVAHLIELLDKEDKLGIKMGYTIGEARNNIKEFIKGE.

Residues 4-239 form the ABC transporter domain; it reads LETRDLKYSY…SETVRSANLR (236 aa). 37–44 serves as a coordination point for ATP; that stretch reads GPNGAGKS.

Belongs to the ABC transporter superfamily. Energy-coupling factor EcfA family. As to quaternary structure, forms a stable energy-coupling factor (ECF) transporter complex composed of 2 membrane-embedded substrate-binding proteins (S component), 2 ATP-binding proteins (A component) and 2 transmembrane proteins (T component).

It localises to the cell membrane. ATP-binding (A) component of a common energy-coupling factor (ECF) ABC-transporter complex. Unlike classic ABC transporters this ECF transporter provides the energy necessary to transport a number of different substrates. This Methanococcus maripaludis (strain DSM 14266 / JCM 13030 / NBRC 101832 / S2 / LL) protein is Energy-coupling factor transporter ATP-binding protein EcfA.